The primary structure comprises 140 residues: 3-hydroxyacyl-[acyl-carrier-protein] dehydratase FabZ (140 aa).

His47 is an active-site residue.

This sequence belongs to the thioester dehydratase family. FabZ subfamily.

It is found in the cytoplasm. The enzyme catalyses a (3R)-hydroxyacyl-[ACP] = a (2E)-enoyl-[ACP] + H2O. In terms of biological role, involved in unsaturated fatty acids biosynthesis. Catalyzes the dehydration of short chain beta-hydroxyacyl-ACPs and long chain saturated and unsaturated beta-hydroxyacyl-ACPs. This chain is 3-hydroxyacyl-[acyl-carrier-protein] dehydratase FabZ, found in Streptococcus agalactiae serotype III (strain NEM316).